We begin with the raw amino-acid sequence, 1383 residues long: ATP-dependent RNA helicase TDRD9 (1383 aa).

Positions 35 to 82 are disordered; sequence EAPREEVQRSEEVPNEDPTAQAQVPVKATAPARPASTSGRSLSQRSSE. Over residues 36–46 the composition is skewed to basic and acidic residues; sequence APREEVQRSEE. A compositionally biased stretch (low complexity) spans 70–80; sequence STSGRSLSQRS. A Helicase ATP-binding domain is found at 144–310; the sequence is ISLIESNSVV…FAVPVQNKMN (167 aa). Position 157–164 (157–164) interacts with ATP; the sequence is GATGSGKS. The DEAH box signature appears at 256–259; sequence DEVH. The Helicase C-terminal domain maps to 378-545; sequence SGAQFVSERS…ILKVKLLDMG (168 aa). Positions 945–1005 constitute a Tudor domain; sequence HPHPDLVCLA…REIPCQFLEL (61 aa).

This sequence belongs to the DEAD box helicase family. DEAH subfamily. Interacts with piRNA-associated proteins PIWIL1 and PIWIL4. In terms of tissue distribution, predominantly expressed in reproductive organs. Detected in mitotic spermatogonia, meiotic spermatocytes (predominantly at the pachytene stage), haploid spermatids in the testis, and in growing oocytes in the ovary (at protein level).

It is found in the cytoplasm. The protein localises to the nucleus. The catalysed reaction is ATP + H2O = ADP + phosphate + H(+). ATP-binding RNA helicase which plays a central role during spermatogenesis by repressing transposable elements and preventing their mobilization, which is essential for the germline integrity. Acts via the piRNA metabolic process, which mediates the repression of transposable elements during meiosis by forming complexes composed of piRNAs and Piwi proteins and governs the methylation and subsequent repression of transposons. Acts downstream of piRNA biogenesis: exclusively required for transposon silencing in the nucleus, suggesting that it acts as a nuclear effector in the nucleus together with PIWIL4. This is ATP-dependent RNA helicase TDRD9 from Mus musculus (Mouse).